The chain runs to 307 residues: Lipoyl synthase (307 aa).

7 residues coordinate [4Fe-4S] cluster: Cys55, Cys60, Cys66, Cys81, Cys85, Cys88, and Ser292. One can recognise a Radical SAM core domain in the interval 67-281 (WEDREATFLI…ARHAEELGFS (215 aa)).

It belongs to the radical SAM superfamily. Lipoyl synthase family. [4Fe-4S] cluster is required as a cofactor.

The protein localises to the cytoplasm. It catalyses the reaction [[Fe-S] cluster scaffold protein carrying a second [4Fe-4S](2+) cluster] + N(6)-octanoyl-L-lysyl-[protein] + 2 oxidized [2Fe-2S]-[ferredoxin] + 2 S-adenosyl-L-methionine + 4 H(+) = [[Fe-S] cluster scaffold protein] + N(6)-[(R)-dihydrolipoyl]-L-lysyl-[protein] + 4 Fe(3+) + 2 hydrogen sulfide + 2 5'-deoxyadenosine + 2 L-methionine + 2 reduced [2Fe-2S]-[ferredoxin]. The protein operates within protein modification; protein lipoylation via endogenous pathway; protein N(6)-(lipoyl)lysine from octanoyl-[acyl-carrier-protein]: step 2/2. Its function is as follows. Catalyzes the radical-mediated insertion of two sulfur atoms into the C-6 and C-8 positions of the octanoyl moiety bound to the lipoyl domains of lipoate-dependent enzymes, thereby converting the octanoylated domains into lipoylated derivatives. This chain is Lipoyl synthase, found in Mycolicibacterium paratuberculosis (strain ATCC BAA-968 / K-10) (Mycobacterium paratuberculosis).